A 390-amino-acid chain; its full sequence is Protein dom34 (390 aa).

It belongs to the eukaryotic release factor 1 family. Pelota subfamily. In terms of assembly, component of the Dom34-Hbs1 complex, also named Pelota-HBS1L complex, composed of dom34 and hbs1. It depends on a divalent metal cation as a cofactor.

The protein localises to the cytoplasm. In terms of biological role, component of the Dom34-Hbs1 complex, a complex that recognizes stalled ribosomes and triggers the No-Go Decay (NGD) pathway. In the Dom34-Hbs1 complex, dom34 recognizes ribosomes stalled at the 3' end of an mRNA and engages stalled ribosomes by destabilizing mRNA in the mRNA channel. Following ribosome-binding, the Dom34-Hbs1 complex promotes the disassembly of stalled ribosomes, followed by degradation of damaged mRNAs as part of the NGD pathway. This chain is Protein dom34, found in Schizosaccharomyces pombe (strain 972 / ATCC 24843) (Fission yeast).